The chain runs to 222 residues: Pyridoxal phosphate homeostasis protein (222 aa).

Residue Lys35 is modified to N6-(pyridoxal phosphate)lysine.

The protein belongs to the pyridoxal phosphate-binding protein YggS/PROSC family.

Its function is as follows. Pyridoxal 5'-phosphate (PLP)-binding protein, which is involved in PLP homeostasis. The polypeptide is Pyridoxal phosphate homeostasis protein (Helicobacter pylori (strain J99 / ATCC 700824) (Campylobacter pylori J99)).